A 923-amino-acid chain; its full sequence is Protocadherin gamma-B4 (923 aa).

Positions 1-30 (MGSGAGELGRAERLPVLFLFLLSLFCPALC) are cleaved as a signal peptide. 6 consecutive Cadherin domains span residues 31 to 133 (EQIR…TPKF), 134 to 242 (TQNS…APVF), 243 to 345 (SQDV…APEV), 346 to 450 (IFQS…APVF), 451 to 560 (SQSS…APRV), and 568 to 673 (DGSA…LPDI). Topologically, residues 31 to 689 (EQIRYRIPEE…SDLQAELQFY (659 aa)) are extracellular. Asn417 and Asn543 each carry an N-linked (GlcNAc...) asparagine glycan. Residues 690–710 (LVVALALISVLFLVAMILAIA) form a helical membrane-spanning segment. Residues 711-923 (LRLRRSSSPA…KKKSGKKEKK (213 aa)) are Cytoplasmic-facing. 2 disordered regions span residues 797-832 (SHQQ…WPNN) and 893-923 (ATLT…KEKK). The span at 913 to 923 (NKKKSGKKEKK) shows a compositional bias: basic residues.

Its subcellular location is the cell membrane. In terms of biological role, potential calcium-dependent cell-adhesion protein. May be involved in the establishment and maintenance of specific neuronal connections in the brain. The protein is Protocadherin gamma-B4 (PCDHGB4) of Homo sapiens (Human).